A 174-amino-acid chain; its full sequence is Endoribonuclease YbeY (174 aa).

Positions 129, 133, and 139 each coordinate Zn(2+).

It belongs to the endoribonuclease YbeY family. Zn(2+) is required as a cofactor.

The protein localises to the cytoplasm. Its function is as follows. Single strand-specific metallo-endoribonuclease involved in late-stage 70S ribosome quality control and in maturation of the 3' terminus of the 16S rRNA. This is Endoribonuclease YbeY from Lactobacillus helveticus (strain DPC 4571).